The following is a 332-amino-acid chain: Torsin-1A (332 aa).

The signal sequence occupies residues 1–20 (MKLGRAVLGLLLLAPSVVQA). The interval 91–251 (KPKKPLTLSL…VSVFNNKNSG (161 aa)) is interaction with SNAPIN. 102–109 (GWTGTGKN) serves as a coordination point for ATP. Asn-143 and Asn-158 each carry an N-linked (GlcNAc...) (high mannose) asparagine glycan. The interaction with KLC1 stretch occupies residues 251–332 (GFWHSSLIDR…FTKLDYYYDD (82 aa)). Positions 312 to 332 (RVFSDKGCKTVFTKLDYYYDD) are interaction with SYNE3.

The protein belongs to the ClpA/ClpB family. Torsin subfamily. Homohexamer. Interacts with TOR1B; the interaction may be specific of neural tissues. Interacts (ATP-bound) with TOR1AIP1 and TOR1AIP2; the interactions induce ATPase activity. Interacts with KLHL14; preferentially when ATP-free. Interacts with KLC1 (via TPR repeats); the interaction associates TOR1A with the kinesin oligomeric complex. Interacts with COPS4; the interaction associates TOR1A with the CSN complex. Interacts with SNAPIN; the interaction is direct and associates SNAPIN with the CSN complex. Interacts with STON2. Interacts (ATP-bound) with SYNE3 (via KASH domain); the interaction is required for SYNE3 nuclear envelope localization. Interacts with VIM; the interaction associates TOR1A with the cytoskeleton. Interacts with PLEC. Interacts (ATP-bound) with SLC6A3; regulates SLC6A3 transport to the plasma membrane. N-glycosylated. As to expression, widely expressed. Highest levels in kidney and liver. In the brain, high levels found in the dopaminergic neurons of the substantia nigra pars compacta, as well as in the neocortex, hippocampus and cerebellum. Also highly expressed in the spinal cord.

It localises to the endoplasmic reticulum lumen. Its subcellular location is the nucleus membrane. The protein localises to the cell projection. It is found in the growth cone. The protein resides in the cytoplasmic vesicle membrane. It localises to the cytoplasmic vesicle. Its subcellular location is the secretory vesicle. The protein localises to the synaptic vesicle. It is found in the cytoplasm. The protein resides in the cytoskeleton. It catalyses the reaction ATP + H2O = ADP + phosphate + H(+). In terms of biological role, protein with chaperone functions important for the control of protein folding, processing, stability and localization as well as for the reduction of misfolded protein aggregates. Involved in the regulation of synaptic vesicle recycling, controls STON2 protein stability in collaboration with the COP9 signalosome complex (CSN). In the nucleus, may link the cytoskeleton with the nuclear envelope, this mechanism seems to be crucial for the control of nuclear polarity, cell movement and, specifically in neurons, nuclear envelope integrity. Participates in the cellular trafficking and may regulate the subcellular location of multipass membrane proteins such as the dopamine transporter SLC6A3, leading to the modulation of dopamine neurotransmission. In the endoplasmic reticulum, plays a role in the quality control of protein folding by increasing clearance of misfolded proteins such as SGCE variants or holding them in an intermediate state for proper refolding. May have a redundant function with TOR1B in non-neural tissues. The protein is Torsin-1A (TOR1A) of Homo sapiens (Human).